Reading from the N-terminus, the 94-residue chain is Phosphoribosyl-ATP pyrophosphatase (94 aa).

Belongs to the PRA-PH family.

The protein resides in the cytoplasm. The catalysed reaction is 1-(5-phospho-beta-D-ribosyl)-ATP + H2O = 1-(5-phospho-beta-D-ribosyl)-5'-AMP + diphosphate + H(+). It functions in the pathway amino-acid biosynthesis; L-histidine biosynthesis; L-histidine from 5-phospho-alpha-D-ribose 1-diphosphate: step 2/9. This chain is Phosphoribosyl-ATP pyrophosphatase (hisE), found in Sulfurisphaera tokodaii (strain DSM 16993 / JCM 10545 / NBRC 100140 / 7) (Sulfolobus tokodaii).